A 125-amino-acid polypeptide reads, in one-letter code: Ribosome-binding factor A (125 aa).

Belongs to the RbfA family. Monomer. Binds 30S ribosomal subunits, but not 50S ribosomal subunits or 70S ribosomes.

The protein localises to the cytoplasm. Functionally, one of several proteins that assist in the late maturation steps of the functional core of the 30S ribosomal subunit. Associates with free 30S ribosomal subunits (but not with 30S subunits that are part of 70S ribosomes or polysomes). Required for efficient processing of 16S rRNA. May interact with the 5'-terminal helix region of 16S rRNA. The chain is Ribosome-binding factor A from Carboxydothermus hydrogenoformans (strain ATCC BAA-161 / DSM 6008 / Z-2901).